Here is a 349-residue protein sequence, read N- to C-terminus: GMP reductase (349 aa).

108 to 131 provides a ligand contact to NADP(+); it reads IDFLKIKKIFLLSSELKYICIDVA. The K(+) site is built by glycine 181 and glycine 183. The active-site Thioimidate intermediate is the cysteine 186. 216-239 provides a ligand contact to NADP(+); it reads IISDGGCTVSGDIAKAFGGGADFV.

It belongs to the IMPDH/GMPR family. GuaC type 1 subfamily. Homotetramer.

The enzyme catalyses IMP + NH4(+) + NADP(+) = GMP + NADPH + 2 H(+). In terms of biological role, catalyzes the irreversible NADPH-dependent deamination of GMP to IMP. It functions in the conversion of nucleobase, nucleoside and nucleotide derivatives of G to A nucleotides, and in maintaining the intracellular balance of A and G nucleotides. The chain is GMP reductase from Buchnera aphidicola subsp. Acyrthosiphon pisum (strain Tuc7).